The primary structure comprises 340 residues: Anthranilate phosphoribosyltransferase (340 aa).

5-phospho-alpha-D-ribose 1-diphosphate-binding positions include G79, 82-83, S87, 89-92, 107-115, and S119; these read GD, NIST, and KHGNRSVSS. Position 79 (G79) interacts with anthranilate. S91 lines the Mg(2+) pocket. An anthranilate-binding site is contributed by N110. An anthranilate-binding site is contributed by R165. Residues D224 and E225 each contribute to the Mg(2+) site.

Belongs to the anthranilate phosphoribosyltransferase family. As to quaternary structure, homodimer. It depends on Mg(2+) as a cofactor.

It catalyses the reaction N-(5-phospho-beta-D-ribosyl)anthranilate + diphosphate = 5-phospho-alpha-D-ribose 1-diphosphate + anthranilate. The protein operates within amino-acid biosynthesis; L-tryptophan biosynthesis; L-tryptophan from chorismate: step 2/5. In terms of biological role, catalyzes the transfer of the phosphoribosyl group of 5-phosphorylribose-1-pyrophosphate (PRPP) to anthranilate to yield N-(5'-phosphoribosyl)-anthranilate (PRA). The polypeptide is Anthranilate phosphoribosyltransferase (Oceanobacillus iheyensis (strain DSM 14371 / CIP 107618 / JCM 11309 / KCTC 3954 / HTE831)).